We begin with the raw amino-acid sequence, 405 residues long: Replication factor C large subunit (405 aa).

Position 47-54 (47-54 (GPPGVGKT)) interacts with ATP.

The protein belongs to the activator 1 small subunits family. RfcL subfamily. As to quaternary structure, heteromultimer composed of small subunits (RfcS) and large subunits (RfcL).

Part of the RFC clamp loader complex which loads the PCNA sliding clamp onto DNA. The protein is Replication factor C large subunit of Saccharolobus islandicus (strain L.S.2.15 / Lassen #1) (Sulfolobus islandicus).